The sequence spans 293 residues: Formamidopyrimidine-DNA glycosylase (293 aa).

Catalysis depends on proline 2, which acts as the Schiff-base intermediate with DNA. Glutamate 3 acts as the Proton donor in catalysis. Catalysis depends on lysine 58, which acts as the Proton donor; for beta-elimination activity. DNA is bound by residues histidine 104, arginine 123, and lysine 166. An FPG-type zinc finger spans residues 257 to 293; that stretch reads KVYDREGETCKTPACGGTIKRFTQNGRSTFWCPKCQK. Catalysis depends on arginine 283, which acts as the Proton donor; for delta-elimination activity.

It belongs to the FPG family. In terms of assembly, monomer. Zn(2+) serves as cofactor.

The enzyme catalyses Hydrolysis of DNA containing ring-opened 7-methylguanine residues, releasing 2,6-diamino-4-hydroxy-5-(N-methyl)formamidopyrimidine.. It catalyses the reaction 2'-deoxyribonucleotide-(2'-deoxyribose 5'-phosphate)-2'-deoxyribonucleotide-DNA = a 3'-end 2'-deoxyribonucleotide-(2,3-dehydro-2,3-deoxyribose 5'-phosphate)-DNA + a 5'-end 5'-phospho-2'-deoxyribonucleoside-DNA + H(+). In terms of biological role, involved in base excision repair of DNA damaged by oxidation or by mutagenic agents. Acts as a DNA glycosylase that recognizes and removes damaged bases. Has a preference for oxidized purines, such as 7,8-dihydro-8-oxoguanine (8-oxoG). Has AP (apurinic/apyrimidinic) lyase activity and introduces nicks in the DNA strand. Cleaves the DNA backbone by beta-delta elimination to generate a single-strand break at the site of the removed base with both 3'- and 5'-phosphates. This is Formamidopyrimidine-DNA glycosylase from Bradyrhizobium diazoefficiens (strain JCM 10833 / BCRC 13528 / IAM 13628 / NBRC 14792 / USDA 110).